The following is a 341-amino-acid chain: tRNA N6-adenosine threonylcarbamoyltransferase (341 aa).

Positions 111 and 115 each coordinate Fe cation. Residues 133–137, Asp-166, Gly-179, Asp-183, and Asn-271 each bind substrate; that span reads VVSGG. Asp-299 is a Fe cation binding site.

Belongs to the KAE1 / TsaD family. Requires Fe(2+) as cofactor.

The protein resides in the cytoplasm. It catalyses the reaction L-threonylcarbamoyladenylate + adenosine(37) in tRNA = N(6)-L-threonylcarbamoyladenosine(37) in tRNA + AMP + H(+). In terms of biological role, required for the formation of a threonylcarbamoyl group on adenosine at position 37 (t(6)A37) in tRNAs that read codons beginning with adenine. Is involved in the transfer of the threonylcarbamoyl moiety of threonylcarbamoyl-AMP (TC-AMP) to the N6 group of A37, together with TsaE and TsaB. TsaD likely plays a direct catalytic role in this reaction. In Fusobacterium nucleatum subsp. nucleatum (strain ATCC 25586 / DSM 15643 / BCRC 10681 / CIP 101130 / JCM 8532 / KCTC 2640 / LMG 13131 / VPI 4355), this protein is tRNA N6-adenosine threonylcarbamoyltransferase.